A 282-amino-acid chain; its full sequence is DegV domain-containing protein SPy_0865/M5005_Spy0672 (282 aa).

Residues 3–280 (LAVITDSTAT…EGAIAFGVTP (278 aa)) enclose the DegV domain. Thr-61 and Ser-94 together coordinate hexadecanoate.

Its function is as follows. May bind long-chain fatty acids, such as palmitate, and may play a role in lipid transport or fatty acid metabolism. This is DegV domain-containing protein SPy_0865/M5005_Spy0672 from Streptococcus pyogenes serotype M1.